The following is a 325-amino-acid chain: MKLENFYVKDDASTDESYGCYPTKRPMEEYIRKGLVCIDKPMGPSSHEVVVWVRRILNVSKTGHAGTLDPRVTGVLPIFIENATKMVKFLQESSKEYVCLMRLHGDAKREDVEKVMKLFVGRIYQRPPLKSAVKKVLRIREIYEMELLEMEGRDVLFRVVTESGTYIRKLCRDIGEVLGTGAHMQELRRTRTGKFGEDMCYTLQDLLDAYVFWKEEGEEKYLREIIKPMEVAAAELPKIVIKDSAVDAICHGANLSVRGVAYVEKNVKKDSTVAIFTLKNELVAIGRALMDAEDIYRLKKGIAADIQRVMMERGVYPKVWKSSSD.

Residue Asp-69 is the Nucleophile of the active site. One can recognise a PUA domain in the interval 236–311 (LPKIVIKDSA…IAADIQRVMM (76 aa)).

The protein belongs to the pseudouridine synthase TruB family. Type 2 subfamily.

It carries out the reaction uridine(55) in tRNA = pseudouridine(55) in tRNA. Its function is as follows. Could be responsible for synthesis of pseudouridine from uracil-55 in the psi GC loop of transfer RNAs. The chain is Probable tRNA pseudouridine synthase B from Archaeoglobus fulgidus (strain ATCC 49558 / DSM 4304 / JCM 9628 / NBRC 100126 / VC-16).